The chain runs to 151 residues: Putative esterase VNG_1336C (151 aa).

It belongs to the thioesterase PaaI family.

The protein is Putative esterase VNG_1336C of Halobacterium salinarum (strain ATCC 700922 / JCM 11081 / NRC-1) (Halobacterium halobium).